The primary structure comprises 359 residues: WAT1-related protein At5g64700 (359 aa).

The next 10 helical transmembrane spans lie at 10–30 (LMVT…KAVF), 37–57 (FVFV…LAFF), 66–86 (LSFV…TLSL), 100–120 (LAAA…LLFG), 135–155 (LVGI…KGPL), 186–206 (WLKG…WLVL), 218–238 (LYFT…IAIA), 256–276 (AVIY…SWVI), 282–302 (VFLS…SAIL), and 306–326 (IISL…YCVL). EamA domains are found at residues 18-136 (IYTI…AKLV) and 198-326 (ILWG…YCVL).

The protein belongs to the drug/metabolite transporter (DMT) superfamily. Plant drug/metabolite exporter (P-DME) (TC 2.A.7.4) family.

It is found in the membrane. This Arabidopsis thaliana (Mouse-ear cress) protein is WAT1-related protein At5g64700.